The following is a 527-amino-acid chain: Baicalin-beta-D-glucuronidase (527 aa).

The signal sequence occupies residues Met-1–Gly-25. Residue Glu-212 is the Proton donor of the active site. The active-site Nucleophile is Glu-329.

Belongs to the glycosyl hydrolase 79 family. Homotetramer.

It carries out the reaction baicalin + H2O = baicalein + D-glucuronate + H(+). Its function is as follows. Beta-glucuronidase involved in the initiation of H(2)O(2) metabolism via the production of baicalein. Unable to use glycyrrhizin, gypsogenin-3-O-D-glucuronide, luteolin-7-O-D-glucoside and apigenin-7-O-D-glucoside as substrates. This Scutellaria baicalensis (Baical skullcap) protein is Baicalin-beta-D-glucuronidase (SGUS).